A 550-amino-acid polypeptide reads, in one-letter code: Warthog protein 8 (550 aa).

An N-terminal signal peptide occupies residues 1–19; sequence MNYLLLVSGLLSVWQPVFG.

Belongs to the hedgehog family. In terms of processing, the C-terminal domain displays an autoproteolysis activity.

Its subcellular location is the secreted. It localises to the cell surface. The protein localises to the cell membrane. The protein resides in the extracellular space. Its function is as follows. Intercellular signal essential for a variety of patterning events during development. In Caenorhabditis elegans, this protein is Warthog protein 8 (wrt-8).